Here is a 493-residue protein sequence, read N- to C-terminus: Alpha-amylase-related protein (493 aa).

Positions M1–A19 are cleaved as a signal peptide. Q20 carries the post-translational modification Pyrrolidone carboxylic acid. C47 and C103 are disulfide-bonded. The Ca(2+) site is built by N117, Q168, and D177. C156 and C170 are joined by a disulfide. R205 is a binding site for chloride. D207 (nucleophile) is an active-site residue. H211 is a Ca(2+) binding site. E244 serves as the catalytic Proton donor. 2 residues coordinate chloride: N307 and R342. Disulfide bonds link C375–C381, C417–C440, and C447–C459.

It belongs to the glycosyl hydrolase 13 family. As to quaternary structure, monomer. The cofactor is Ca(2+). Chloride is required as a cofactor.

It is found in the secreted. It catalyses the reaction Endohydrolysis of (1-&gt;4)-alpha-D-glucosidic linkages in polysaccharides containing three or more (1-&gt;4)-alpha-linked D-glucose units.. This chain is Alpha-amylase-related protein (Amyrel), found in Drosophila ananassae (Fruit fly).